The primary structure comprises 342 residues: Platelet-activating factor receptor (342 aa).

Residues 1–16 (MEPNNSFRVDSEFRYT) are Extracellular-facing. N-linked (GlcNAc...) asparagine glycosylation occurs at Asn4. A helical membrane pass occupies residues 17–38 (LFPIFYSIVFVLGVIANSYVLW). The Cytoplasmic portion of the chain corresponds to 39 to 54 (VFARLYPSKKFNEIKI). Residues 55 to 74 (FMVNLTMADLLFLVTLPLWI) traverse the membrane as a helical segment. At 75-91 (VYYYNQGDWILPKFLCN) the chain is on the extracellular side. A disulfide bond links Cys90 and Cys173. Residues 92–113 (LAGCFFFINTYCSVAFLAVITY) traverse the membrane as a helical segment. Topologically, residues 114 to 133 (NRFQAVTRPIKTAQATTRKR) are cytoplasmic. The helical transmembrane segment at 134–155 (GFLLSLIIWVSIVGAASYFFVL) threads the bilayer. Residues 156 to 184 (DSTNSEPKKTGSGNITRCFEHYEKGSIPV) are Extracellular-facing. Asn169 carries N-linked (GlcNAc...) asparagine glycosylation. Residues 185–205 (LIIHIFLVFSFFLVFLIILFC) traverse the membrane as a helical segment. The Cytoplasmic portion of the chain corresponds to 206 to 233 (NLVIIRTLLTQQVQMQRNAEVKRRALWM). Residues 234–254 (VCTVLAVFVICFVPHHLVQLP) form a helical membrane-spanning segment. Residues 255-276 (WTLAELGFQDTDFHQGINDAHQ) are Extracellular-facing. A helical transmembrane segment spans residues 277 to 296 (VTLCLLSTNCVLDPIIYCFL). The Cytoplasmic segment spans residues 297–342 (TKKFRKHLTEKLYSMRESRKCSRATSETGTEVVVQLKDAPIKSLKY).

Belongs to the G-protein coupled receptor 1 family. Interacts with ARRB1.

The protein resides in the cell membrane. Its function is as follows. Receptor for platelet activating factor, a chemotactic phospholipid mediator that possesses potent inflammatory, smooth-muscle contractile and hypotensive activity. Seems to mediate its action via a G protein that activates a phosphatidylinositol-calcium second messenger system. In Capra hircus (Goat), this protein is Platelet-activating factor receptor.